Consider the following 867-residue polypeptide: Probable beta-glucosidase A (867 aa).

Positions methionine 1 to alanine 18 are cleaved as a signal peptide. Asparagine 67, asparagine 218, and asparagine 259 each carry an N-linked (GlcNAc...) asparagine glycan. Aspartate 287 is a catalytic residue. N-linked (GlcNAc...) asparagine glycans are attached at residues asparagine 322, asparagine 329, asparagine 361, asparagine 449, asparagine 530, asparagine 549, asparagine 571, asparagine 675, and asparagine 719.

It belongs to the glycosyl hydrolase 3 family.

The protein resides in the secreted. It carries out the reaction Hydrolysis of terminal, non-reducing beta-D-glucosyl residues with release of beta-D-glucose.. The protein operates within glycan metabolism; cellulose degradation. Beta-glucosidases are one of a number of cellulolytic enzymes involved in the degradation of cellulosic biomass. Catalyzes the last step releasing glucose from the inhibitory cellobiose. This is Probable beta-glucosidase A (bglA) from Aspergillus clavatus (strain ATCC 1007 / CBS 513.65 / DSM 816 / NCTC 3887 / NRRL 1 / QM 1276 / 107).